The chain runs to 526 residues: MAVPDWKHAADVVVIGTGVAGLAAALAAHRAGRNVVVLTKADQRRGETATHYAQGGIAVVLPGSDDSVDAHASDTLAAGAGMCNLDTVYSIVAEGYHAVTELVGYGARFDESIPGRWAVTCEGGHSRRRIVHAGGDATGAEVQRALDHAADVLDIRTSHLALRVLHDGTVVNGVSVLNPNGWGIVSAPSVILASGGLGHLYGATTNPEGSTGDGIALALWAGVAVSDLEFIQFHPTMLFAAGTGTGGRRPLVTEAIRGEGAILLDSKGNSVTSGVHPLGDLAPRDVVAAAIDARLKATGDSCVYLDARGIDGFASRFPTVTAACRTVGIDPAREPIPVVPGAHYSCGGIVTDAYGQTELAGLFAAGEVARTGMHGANRLASNSLLEGLVVGGRAGRAAAAHAAAAGRAYVSKLEPVTHHALKRRELQRVMSRDAAVMRNAAGLQRLSDTLAEAPIRHVTGRRDFEDVALTLTARAVAAAALARNESRGCHHCTEYPDTAPEHARSTVIRLADDQNLVRAEALATVG.

FAD-binding positions include 17–20 (TGVA), Lys40, 49–56 (ATHYAQGG), and Asp213. The Proton donor/acceptor role is filled by Arg284. Residues Glu367 and 383 to 384 (SL) contribute to the FAD site.

Belongs to the FAD-dependent oxidoreductase 2 family. NadB subfamily. FAD is required as a cofactor.

It localises to the cytoplasm. The enzyme catalyses L-aspartate + O2 = iminosuccinate + H2O2. It functions in the pathway cofactor biosynthesis; NAD(+) biosynthesis; iminoaspartate from L-aspartate (oxidase route): step 1/1. In terms of biological role, catalyzes the oxidation of L-aspartate to iminoaspartate, the first step in the de novo biosynthesis of NAD(+). The sequence is that of L-aspartate oxidase (nadB) from Mycobacterium leprae (strain TN).